The chain runs to 299 residues: ATP phosphoribosyltransferase (299 aa).

It belongs to the ATP phosphoribosyltransferase family. Long subfamily. Mg(2+) is required as a cofactor.

The protein localises to the cytoplasm. The catalysed reaction is 1-(5-phospho-beta-D-ribosyl)-ATP + diphosphate = 5-phospho-alpha-D-ribose 1-diphosphate + ATP. The protein operates within amino-acid biosynthesis; L-histidine biosynthesis; L-histidine from 5-phospho-alpha-D-ribose 1-diphosphate: step 1/9. Its activity is regulated as follows. Feedback inhibited by histidine. Catalyzes the condensation of ATP and 5-phosphoribose 1-diphosphate to form N'-(5'-phosphoribosyl)-ATP (PR-ATP). Has a crucial role in the pathway because the rate of histidine biosynthesis seems to be controlled primarily by regulation of HisG enzymatic activity. This is ATP phosphoribosyltransferase from Shewanella sp. (strain MR-7).